A 188-amino-acid chain; its full sequence is MKAIDKKIERFARYLQRQNNLDHIQFLKIRLGLQVALGNFFKTIVTYGVALLFHTFLYTLITHLTYFFVRRFAHGAHARSSLLCHIQNLVLFVALPWSIVHFQVSWTFMIFVAFIAFIIIICYAPSATKKQPILPHLRKKKKRNAILISICFLVLMLFVSEPYMQLIALGMCIEAITLLPIFFSKEET.

Helical transmembrane passes span 49–69, 82–102, 104–124, and 163–183; these read VALLFHTFLYTLITHLTYFFV, LLCHIQNLVLFVALPWSIVHF, VSWTFMIFVAFIAFIIIICYA, and YMQLIALGMCIEAITLLPIFF.

It belongs to the AgrB family.

The protein resides in the cell membrane. Functionally, essential for the production of a quorum sensing system signal molecule, the autoinducing peptide (AIP). This quorum sensing system is responsible for the regulation of the expression of virulence factor genes. Involved in the proteolytic processing of AgrD, the precursor of AIP. In Staphylococcus lugdunensis, this protein is Accessory gene regulator protein B.